Consider the following 173-residue polypeptide: Large ribosomal subunit protein uL10 (173 aa).

The protein belongs to the universal ribosomal protein uL10 family. In terms of assembly, part of the ribosomal stalk of the 50S ribosomal subunit. The N-terminus interacts with L11 and the large rRNA to form the base of the stalk. The C-terminus forms an elongated spine to which L12 dimers bind in a sequential fashion forming a multimeric L10(L12)X complex.

In terms of biological role, forms part of the ribosomal stalk, playing a central role in the interaction of the ribosome with GTP-bound translation factors. The protein is Large ribosomal subunit protein uL10 of Bifidobacterium animalis subsp. lactis (strain AD011).